Reading from the N-terminus, the 267-residue chain is Large ribosomal subunit protein bL9m (267 aa).

The transit peptide at 1–52 directs the protein to the mitochondrion; that stretch reads MAALVVTEPGRALLRAGTERLLRGGIQELLRPRHEGNSPGLARDFSLSQNRG.

This sequence belongs to the bacterial ribosomal protein bL9 family. In terms of assembly, component of the mitochondrial ribosome large subunit (39S) which comprises a 16S rRNA and about 50 distinct proteins.

It is found in the mitochondrion. The chain is Large ribosomal subunit protein bL9m (MRPL9) from Papio anubis (Olive baboon).